Here is a 335-residue protein sequence, read N- to C-terminus: MQVTILGAGAFGTALSIALCNTGKKVRIWSRNGQVVESLRTHGENSVYLPGFKVPREVLVHSDMGLATDGPAAILMCVPAQELRSLCNTITAASALEAGVPLLVCSKGIENSSLKFPSEVVAEMFPQNPVFVLSGPALARELASGLPCAMVLAGDEITTAETLASQLSGPALAIVHSGDLMGVQVGAVMKNIIAIASGIIAGMGLGHNASAIVMVQGMSEIKAVCEAKVGVAATETLIGLSCLGDLVLTCTAPGSRNMSFGSSVGKAGRAGASGQQKPMLVEGVESVTAMVNMGKALNLELPICSAIARMLHGQLGVRQAAAEILSAPVKSRLNV.

NADPH is bound by residues Phe11, Arg31, and Lys107. 2 residues coordinate sn-glycerol 3-phosphate: Lys107 and Gly135. Ala139 contributes to the NADPH binding site. Residues Lys190, Asp245, Ser255, Arg256, and Asn257 each coordinate sn-glycerol 3-phosphate. Lys190 acts as the Proton acceptor in catalysis. Arg256 serves as a coordination point for NADPH. Residues Leu280 and Glu282 each contribute to the NADPH site.

It belongs to the NAD-dependent glycerol-3-phosphate dehydrogenase family.

The protein localises to the cytoplasm. It catalyses the reaction sn-glycerol 3-phosphate + NAD(+) = dihydroxyacetone phosphate + NADH + H(+). It carries out the reaction sn-glycerol 3-phosphate + NADP(+) = dihydroxyacetone phosphate + NADPH + H(+). It functions in the pathway membrane lipid metabolism; glycerophospholipid metabolism. Functionally, catalyzes the reduction of the glycolytic intermediate dihydroxyacetone phosphate (DHAP) to sn-glycerol 3-phosphate (G3P), the key precursor for phospholipid synthesis. This chain is Glycerol-3-phosphate dehydrogenase [NAD(P)+], found in Anaplasma marginale (strain St. Maries).